We begin with the raw amino-acid sequence, 228 residues long: Phosphoribosylformylglycinamidine synthase subunit PurQ (228 aa).

A Glutamine amidotransferase type-1 domain is found at 3 to 226; the sequence is FAVIVFPGSN…VNYWRETHVV (224 aa). Cys86 serves as the catalytic Nucleophile. Active-site residues include His195 and Glu197.

Part of the FGAM synthase complex composed of 1 PurL, 1 PurQ and 2 PurS subunits.

It is found in the cytoplasm. The catalysed reaction is N(2)-formyl-N(1)-(5-phospho-beta-D-ribosyl)glycinamide + L-glutamine + ATP + H2O = 2-formamido-N(1)-(5-O-phospho-beta-D-ribosyl)acetamidine + L-glutamate + ADP + phosphate + H(+). The enzyme catalyses L-glutamine + H2O = L-glutamate + NH4(+). The protein operates within purine metabolism; IMP biosynthesis via de novo pathway; 5-amino-1-(5-phospho-D-ribosyl)imidazole from N(2)-formyl-N(1)-(5-phospho-D-ribosyl)glycinamide: step 1/2. Part of the phosphoribosylformylglycinamidine synthase complex involved in the purines biosynthetic pathway. Catalyzes the ATP-dependent conversion of formylglycinamide ribonucleotide (FGAR) and glutamine to yield formylglycinamidine ribonucleotide (FGAM) and glutamate. The FGAM synthase complex is composed of three subunits. PurQ produces an ammonia molecule by converting glutamine to glutamate. PurL transfers the ammonia molecule to FGAR to form FGAM in an ATP-dependent manner. PurS interacts with PurQ and PurL and is thought to assist in the transfer of the ammonia molecule from PurQ to PurL. In Geobacillus thermodenitrificans (strain NG80-2), this protein is Phosphoribosylformylglycinamidine synthase subunit PurQ.